Here is a 268-residue protein sequence, read N- to C-terminus: Expansin-B3 (268 aa).

A signal peptide spans 1–25; the sequence is MAFSISKKAAVAALFSFLVVTCVAG. N-linked (GlcNAc...) asparagine glycosylation occurs at Asn30. The Expansin-like EG45 domain occupies 62-168; sequence GGACGFKNTN…KRVPCNFPGL (107 aa). Disulfide bonds link Cys65–Cys93, Cys96–Cys163, and Cys101–Cys107. The Expansin-like CBD domain maps to 181 to 262; it reads VYFAVLVEYE…NWAPMAVYRS (82 aa). An N-linked (GlcNAc...) asparagine glycan is attached at Asn238.

The protein belongs to the expansin family. Expansin B subfamily. As to expression, expressed in roots, coleoptiles and internodes.

It localises to the secreted. The protein resides in the cell wall. It is found in the membrane. Its function is as follows. May cause loosening and extension of plant cell walls by disrupting non-covalent bonding between cellulose microfibrils and matrix glucans. No enzymatic activity has been found. May be required for rapid internodal elongation in deepwater rice during submergence. The chain is Expansin-B3 (EXPB3) from Oryza sativa subsp. japonica (Rice).